The following is a 1630-amino-acid chain: Merozoite surface protein 1 (1630 aa).

Positions 1 to 19 (MKIIFFLCSFLFFIINTQC) are cleaved as a signal peptide. Positions 60 to 113 (TKGASAQSGTSGTSGTSGPSGPSGTSPSSRSNTLPRSNTSSGASPPADASDSDA) are disordered. The interval 67–84 (SGTSGTSGTSGPSGPSGT) is tripeptide SG(TP) repeat. Positions 67–88 (SGTSGTSGTSGPSGPSGTSPSS) are enriched in low complexity. Polar residues predominate over residues 89–98 (RSNTLPRSNT). Asn97 carries N-linked (GlcNAc...) asparagine glycosylation. Residues 99 to 108 (SSGASPPADA) are compositionally biased toward low complexity. Asn259 carries an N-linked (GlcNAc...) asparagine glycan. The interval 680–755 (KKNIKTEGQS…VPTPPAPVNN (76 aa)) is disordered. 2 stretches are compositionally biased toward polar residues: residues 685 to 695 (TEGQSDNSEPS) and 702 to 713 (GQATTKPGQQAG). Over residues 721–732 (VQAQAQEQKQAQ) the composition is skewed to low complexity. Residues Asn755, Asn759, Asn774, and Asn835 are each glycosylated (N-linked (GlcNAc...) asparagine). Residues 884 to 906 (SMQPLSLTPQDKPEVSANDDTSH) form a disordered region. N-linked (GlcNAc...) asparagine glycosylation is found at Asn911, Asn955, Asn1049, Asn1156, and Asn1165. The interval 993-1107 (QLSFDLYNKY…EESIQTEDNY (115 aa)) is required for binding to host erythrocyte cell membrane. Residues 1190 to 1203 (VSESGSDTLEQSQP) show a composition bias toward polar residues. The disordered stretch occupies residues 1190–1220 (VSESGSDTLEQSQPKKPASTHVGAESNTITT). 2 N-linked (GlcNAc...) asparagine glycosylation sites follow: Asn1436 and Asn1517. EGF-like domains are found at residues 1521–1561 (HQCV…VENP) and 1562–1610 (NPTC…FCSS). Disulfide bonds link Cys1523/Cys1534, Cys1528/Cys1544, Cys1546/Cys1557, Cys1565/Cys1578, Cys1572/Cys1592, and Cys1594/Cys1608. The GPI-anchor amidated serine moiety is linked to residue Ser1609. The propeptide at 1610 to 1630 (SSNFLGISFLLILMLILYSFI) is removed in mature form.

As to quaternary structure, forms a complex composed of subunits p83, p30, p38, and p42 which remain non-covalently associated; the complex is formed at the merozoite surface prior to egress from host erythrocytes. Forms a complex composed of processed MSP1 subunits, MSP6 subunit p36 and MSP7; the complex is formed at the merozoite surface prior to egress from host erythrocytes. Within the complex, interacts (via subunit p38) with MSP6 subunit p36 and (via subunits p83, p30 and p38) with MSP7 (via subunit p22). Forms a complex composed of MSP1, MSP6, DBLMSP1 and DBLMSP2. Within the complex, interacts (via subunit p38) with DBLMSP1 and DBLMSP2. Forms a complex composed of MSP1, and rhoptry proteins RhopH3, RAP1 and CLAG9/RhopH3. Within the complex, interacts (via subunits p42 and p19) with RhopH3 (via C-terminus). Forms a complex composed of MSP1, MSP6, MSP7, MSP9 and MSP3; within the complex, MSP6 and MSP9 mediate the binding to the host erythrocyte. Interacts (via subunits p19 and p42) with MSP9; the interaction is direct; MSP1 subunits p19 or p42, and MSP9 form a co-ligand complex that interacts with host SLC4A1/Band 3 protein. May interact with PFD6. Interacts with host spectrin. In terms of assembly, interacts with host glycophorin GYPA in a sialic acid-independent manner. Interacts with host proinflammatory cytokine S100P; the interaction blocks S100P inflammatory and chemotactic activities. As to quaternary structure, interacts with host SLC4A1/Band 3 (via 5ABC region) on the host erythrocyte surface in a sialic acid-independent manner. The p190 precursor is cleaved by SUB1 prior to merozoite egress into 4 subunits p83, p30, p38, and p42 which remain non-covalently associated. SUB1-mediated proteolytic cleavage occurs in an orderly manner; the first cleavage occurs at the p83/p30 site, followed by cleavage at the p30/p38 site, the last cleavage occurs at the p38/p42 site. The order of cleavage is essential for parasite viability. SUB1-mediated processing is essential for merozoite egress. In a second processing step during erythrocyte invasion, p42 is cleaved by SUB2 into p33 and p19; the latter remains attached to the merozoite surface via its GPI-anchor and stays on the surface during the subsequent ring stage.

The protein localises to the cell membrane. The protein resides in the secreted. Its subcellular location is the vacuole membrane. Its function is as follows. During the asexual blood stage, involved in merozoite egress from host erythrocytes possibly via its interaction with the host cytoskeleton protein spectrin resulting in the destabilization of the host cytoskeleton and thus leading to erythrocyte cell membrane rupture. Involved in the binding to host erythrocytes and is required for host erythrocyte invasion. Functionally, by binding to host proinflammatory cytokine S100P may interfere with host immune responses. Involved in merozoite invasion of host erythrocytes. May play a role in the biogenesis and/or function of the food vacuole during the intraerythrocytic development. This is Merozoite surface protein 1 from Plasmodium falciparum (isolate K1 / Thailand).